The sequence spans 158 residues: Ribonuclease H (158 aa).

Positions 1-142 constitute an RNase H type-1 domain; that stretch reads MRKQVEIFTD…CDELARAAAM (142 aa). The Mg(2+) site is built by aspartate 10, glutamate 48, aspartate 70, and aspartate 134.

Belongs to the RNase H family. In terms of assembly, monomer. Requires Mg(2+) as cofactor.

Its subcellular location is the cytoplasm. It carries out the reaction Endonucleolytic cleavage to 5'-phosphomonoester.. Its function is as follows. Endonuclease that specifically degrades the RNA of RNA-DNA hybrids. The sequence is that of Ribonuclease H from Cronobacter sakazakii (strain ATCC BAA-894) (Enterobacter sakazakii).